A 242-amino-acid chain; its full sequence is Biosynthetic peptidoglycan transglycosylase (242 aa).

Residues 19–39 (ILAALAVFWGGGIALFSVVPV) form a helical membrane-spanning segment.

It belongs to the glycosyltransferase 51 family.

The protein resides in the cell inner membrane. The catalysed reaction is [GlcNAc-(1-&gt;4)-Mur2Ac(oyl-L-Ala-gamma-D-Glu-L-Lys-D-Ala-D-Ala)](n)-di-trans,octa-cis-undecaprenyl diphosphate + beta-D-GlcNAc-(1-&gt;4)-Mur2Ac(oyl-L-Ala-gamma-D-Glu-L-Lys-D-Ala-D-Ala)-di-trans,octa-cis-undecaprenyl diphosphate = [GlcNAc-(1-&gt;4)-Mur2Ac(oyl-L-Ala-gamma-D-Glu-L-Lys-D-Ala-D-Ala)](n+1)-di-trans,octa-cis-undecaprenyl diphosphate + di-trans,octa-cis-undecaprenyl diphosphate + H(+). The protein operates within cell wall biogenesis; peptidoglycan biosynthesis. Peptidoglycan polymerase that catalyzes glycan chain elongation from lipid-linked precursors. The protein is Biosynthetic peptidoglycan transglycosylase of Salmonella agona (strain SL483).